The primary structure comprises 766 residues: Phospholipid phosphatase-related protein type 4 (766 aa).

A Phosphoserine modification is found at serine 37. Transmembrane regions (helical) follow at residues 68–88 (LPCFYFVELPILASSVVSLYF), 120–140 (AIPFLMLLSLAFAGPAITIMV), and 179–199 (FVGVHVFGLCSTALITDIIQL). Residues asparagine 215 and asparagine 220 are each glycosylated (N-linked (GlcNAc...) asparagine). The helical transmembrane segment at 248–268 (SFPSQHATLAAFAAVYVSMYF) threads the bilayer. The N-linked (GlcNAc...) asparagine glycan is linked to asparagine 269. Helical transmembrane passes span 277–297 (KLLKPLLVFTFIICGIICGLT) and 309–329 (VYCGFLIGGGIALYLGLYAVG). Serine 347 is modified (phosphoserine). The N-linked (GlcNAc...) asparagine glycan is linked to asparagine 363. Serine 386 bears the Phosphoserine mark. Asparagine 433 carries N-linked (GlcNAc...) asparagine glycosylation. At serine 439 the chain carries Phosphoserine. The interval 454 to 494 (SKNESRKMSLQVMDTEPEGQSPPRSIEMRSSSEPSRVGVNG) is disordered. A glycan (N-linked (GlcNAc...) asparagine) is linked at asparagine 456. Serine 462 and serine 474 each carry phosphoserine. 3 N-linked (GlcNAc...) asparagine glycosylation sites follow: asparagine 515, asparagine 545, and asparagine 570. Serine 608 is modified (phosphoserine). Disordered regions lie at residues 634-654 (PIIQIPSSTEGEGSGSWKWKA), 672-701 (DSESCESLKDSFGSGDRKRSNIDSNEHHHH), and 742-766 (ERSNSPENTRNIFYKGTSPTRAYKD). A compositionally biased stretch (basic and acidic residues) spans 672–697 (DSESCESLKDSFGSGDRKRSNIDSNE). The segment covering 743 to 752 (RSNSPENTRN) has biased composition (polar residues).

This sequence belongs to the PA-phosphatase related phosphoesterase family. In terms of processing, O-glycosylated. Probably at Ser-347. Brain-specific, it is exclusively expressed in neurons (at protein level).

Its subcellular location is the postsynaptic density membrane. In terms of biological role, postsynaptic density membrane protein that indirectly regulates glutamatergic synaptic transmission through lysophosphatidic acid (LPA)-mediated signaling pathways. Binds lysophosphatidic acid (LPA) and mediates its internalization into cells. Could act as receptor or a transporter of this lipid at the post-synaptic membrane. Modulates lysophosphatidic acid (LPA) activity in neuron axonal outgrowth during development by attenuating phospholipid-induced axon collapse. This Mus musculus (Mouse) protein is Phospholipid phosphatase-related protein type 4.